Reading from the N-terminus, the 89-residue chain is Small ribosomal subunit protein uS15 (89 aa).

It belongs to the universal ribosomal protein uS15 family. In terms of assembly, part of the 30S ribosomal subunit. Forms a bridge to the 50S subunit in the 70S ribosome, contacting the 23S rRNA.

Its function is as follows. One of the primary rRNA binding proteins, it binds directly to 16S rRNA where it helps nucleate assembly of the platform of the 30S subunit by binding and bridging several RNA helices of the 16S rRNA. Functionally, forms an intersubunit bridge (bridge B4) with the 23S rRNA of the 50S subunit in the ribosome. The sequence is that of Small ribosomal subunit protein uS15 from Listeria innocua serovar 6a (strain ATCC BAA-680 / CLIP 11262).